The primary structure comprises 354 residues: GDSL esterase/lipase At5g03820 (354 aa).

An N-terminal signal peptide occupies residues 1–24; sequence MKMFIIMLMTFSVIACFYAGVGTG. Residue serine 37 is the Nucleophile of the active site. N-linked (GlcNAc...) asparagine glycosylation is found at asparagine 66, asparagine 100, asparagine 237, asparagine 256, asparagine 257, asparagine 261, and asparagine 321. Catalysis depends on residues aspartate 329 and histidine 332.

It belongs to the 'GDSL' lipolytic enzyme family.

It localises to the secreted. The polypeptide is GDSL esterase/lipase At5g03820 (Arabidopsis thaliana (Mouse-ear cress)).